The primary structure comprises 144 residues: uncharacterized protein (144 aa).

Residues 23–82 (EELYKKLENNLRKIETSYLDSKHCQDFKRKIEYYKIVPLISETKEIIKVLIQKIETLEIK) adopt a coiled-coil conformation.

This is an uncharacterized protein from Acanthamoeba polyphaga mimivirus (APMV).